The sequence spans 339 residues: MTTRTESPTVVQLPPVYFPTALKVHPQIELMEERGLEWMARYGFCSDPVQATRVRDSRSAHFFGYLCPKADPDRLQAAVDWGYLMFAFDDVSSDGDSSALLDIAVRIVRTLEAPDANVLPSDNPYTAPIVDLATRVHRTCAPEHVRRLVDSHTKWLLGAAWECAVRQRPSINDYLSARVMYAGAEPTFTWFQLSEAVVVPEQEITSPRVRALTEMAGTVAAIDNDLYSHGKELWTRQSRSDLSGTGLDLPSCVALRDRIVARFFELRNEVLPTASPALARYLHNLTCALRGNFEWGLETERYSNPDGNHPGAVRTLGSVSNTPSAVGPPGIPSIDWWWR.

Aspartate 89, aspartate 94, asparagine 224, serine 228, and glutamate 232 together coordinate Mg(2+).

Belongs to the terpene synthase family. Requires Mg(2+) as cofactor.

The enzyme catalyses (2E,6E,10E)-geranylgeranyl diphosphate = phomopsene + diphosphate. The catalysed reaction is (2E,6E,10E)-geranylgeranyl diphosphate = allokutznerene + diphosphate. The protein operates within secondary metabolite biosynthesis; terpenoid biosynthesis. In terms of biological role, diterpene synthase that catalyzes the conversion of geranylgeranyl diphosphate (GGPP) to phomopsene, a diterpene previously reported from the fungus P.amygdali. Phomopsene is the main product, but the enzyme can also produce allokutznerene (about 50% of phomopsene production activity) and traces of spiroviolene. Cannot use geranyl diphosphate (GPP), farnesyl diphosphate (FPP) and geranylfarnesyl diphosphate (GFPP). In Allokutzneria albata (Kibdelosporangium albatum), this protein is Phomopsene synthase.